The primary structure comprises 259 residues: Keratin-associated protein 10-8 (259 aa).

Residues 26-243 form a 19 X 5 AA repeats of C-C-X(3) region; sequence HVSRVSSPST…SCQPSCCHPA (218 aa). 19 consecutive repeat copies span residues 50-54, 60-64, 65-69, 98-102, 108-112, 118-122, 123-127, 133-137, 145-149, 155-159, 165-169, 170-174, 175-179, 187-191, 197-201, 202-206, 221-225, 228-232, and 239-243.

The protein belongs to the KRTAP type 10 family. In terms of assembly, interacts with hair keratins. Restricted to a narrow region of the hair fiber cuticle, lying approximately 20 cell layers above the apex of the dermal papilla of the hair root; not detected in any other tissues.

Its function is as follows. In the hair cortex, hair keratin intermediate filaments are embedded in an interfilamentous matrix, consisting of hair keratin-associated proteins (KRTAP), which are essential for the formation of a rigid and resistant hair shaft through their extensive disulfide bond cross-linking with abundant cysteine residues of hair keratins. The matrix proteins include the high-sulfur and high-glycine-tyrosine keratins. This Homo sapiens (Human) protein is Keratin-associated protein 10-8 (KRTAP10-8).